Here is a 179-residue protein sequence, read N- to C-terminus: Large ribosomal subunit protein uL5 (179 aa).

Belongs to the universal ribosomal protein uL5 family. In terms of assembly, part of the 50S ribosomal subunit; part of the 5S rRNA/L5/L18/L25 subcomplex. Contacts the 5S rRNA and the P site tRNA. Forms a bridge to the 30S subunit in the 70S ribosome.

Its function is as follows. This is one of the proteins that bind and probably mediate the attachment of the 5S RNA into the large ribosomal subunit, where it forms part of the central protuberance. In the 70S ribosome it contacts protein S13 of the 30S subunit (bridge B1b), connecting the 2 subunits; this bridge is implicated in subunit movement. Contacts the P site tRNA; the 5S rRNA and some of its associated proteins might help stabilize positioning of ribosome-bound tRNAs. In Photorhabdus laumondii subsp. laumondii (strain DSM 15139 / CIP 105565 / TT01) (Photorhabdus luminescens subsp. laumondii), this protein is Large ribosomal subunit protein uL5.